A 74-amino-acid chain; its full sequence is Putative defensin-like protein 12 (74 aa).

Positions 1-26 are cleaved as a signal peptide; the sequence is MAKPCAAFLVFLCLSMLILSIPDISC. 3 cysteine pairs are disulfide-bonded: cysteine 26-cysteine 50, cysteine 33-cysteine 59, and cysteine 39-cysteine 61.

This sequence belongs to the DEFL family.

It is found in the secreted. The sequence is that of Putative defensin-like protein 12 from Arabidopsis thaliana (Mouse-ear cress).